A 116-amino-acid chain; its full sequence is Ferredoxin-like protein in nif region (116 aa).

A 4Fe-4S ferredoxin-type domain is found at 2 to 29; that stretch reads AYTITSQCISCKLCSSVCPTGAIKVAED. Positions 9, 12, 15, and 19 each coordinate iron-sulfur cluster.

The chain is Ferredoxin-like protein in nif region (fdxN) from Trichormus azollae (Anabaena azollae).